The chain runs to 139 residues: MGELANCPKCNALFLKTKLQTVCQACIKEEEKSFETVYKFLRKQENRQSTLSRITEETGVEEELILKFIRQKRIQITHLPNLAYPCERCGTSIREGKFCKACQSDIKDQMDHLNHEDALKIEKENSKKDTYYAYNTKNS.

It to S.typhimurium FliF.

In terms of biological role, may be involved in the assembly, structure, or function of the flagellum. May polymerize to form a filamentous structure that is part of the flagellum. This is an uncharacterized protein from Bacillus subtilis (strain 168).